Here is a 64-residue protein sequence, read N- to C-terminus: SPbeta prophage-derived uncharacterized protein YonP (64 aa).

This Bacillus subtilis (strain 168) protein is SPbeta prophage-derived uncharacterized protein YonP (yonP).